The sequence spans 138 residues: Putative pre-16S rRNA nuclease (138 aa).

The protein belongs to the YqgF nuclease family.

It localises to the cytoplasm. In terms of biological role, could be a nuclease involved in processing of the 5'-end of pre-16S rRNA. In Flavobacterium johnsoniae (strain ATCC 17061 / DSM 2064 / JCM 8514 / BCRC 14874 / CCUG 350202 / NBRC 14942 / NCIMB 11054 / UW101) (Cytophaga johnsonae), this protein is Putative pre-16S rRNA nuclease.